A 199-amino-acid chain; its full sequence is dITP/XTP pyrophosphatase (199 aa).

A substrate-binding site is contributed by 9–14; the sequence is TGNKGK. E41 and D70 together coordinate Mg(2+). Catalysis depends on D70, which acts as the Proton acceptor. Residues S71, 157–160, K180, and 185–186 contribute to the substrate site; these read FGYD and HR.

This sequence belongs to the HAM1 NTPase family. In terms of assembly, homodimer. It depends on Mg(2+) as a cofactor.

It carries out the reaction XTP + H2O = XMP + diphosphate + H(+). The catalysed reaction is dITP + H2O = dIMP + diphosphate + H(+). The enzyme catalyses ITP + H2O = IMP + diphosphate + H(+). Functionally, pyrophosphatase that catalyzes the hydrolysis of nucleoside triphosphates to their monophosphate derivatives, with a high preference for the non-canonical purine nucleotides XTP (xanthosine triphosphate), dITP (deoxyinosine triphosphate) and ITP. Seems to function as a house-cleaning enzyme that removes non-canonical purine nucleotides from the nucleotide pool, thus preventing their incorporation into DNA/RNA and avoiding chromosomal lesions. This chain is dITP/XTP pyrophosphatase, found in Mannheimia succiniciproducens (strain KCTC 0769BP / MBEL55E).